The sequence spans 336 residues: MEIKQKKVWLSLIVLYAITTSVLGDFGEPLLKGFYKESCPLAEEIVKHNIEVAVLKDPRMAASLLRLQFHDCFVLGCDASVLLDTHGDMLSEKQATPNLNSLRGFEVIDYIKYLLEEACPLTVSCSDILALAARDSVFLRGGPWWEVLLGRRDSLKASFAGANQFIPAPNSSLDSLIINFKQQGLNIQDLIALSGAHTIGKARCVSFKQRIVQPNMEQTFYVDEFRRHSTFRRVLGSQCKDSSRDNELSPLDIKTPAYFDNHYFINLLEGRGLLISDNVLVSEDHEGEIFQKVWEYAVNQDLFFIDFVESMLKMGNINVLTGIEGEIRENCRFVNI.

The signal sequence occupies residues 1–24 (MEIKQKKVWLSLIVLYAITTSVLG). 4 disulfides stabilise this stretch: C39–C119, C72–C77, C125–C331, and C204–C239. Catalysis depends on H70, which acts as the Proton acceptor. Positions 71, 74, 76, 78, and 80 each coordinate Ca(2+). P167 lines the substrate pocket. N170 carries N-linked (GlcNAc...) asparagine glycosylation. H197 is a heme b binding site. T198 contributes to the Ca(2+) binding site. 3 residues coordinate Ca(2+): D252, T255, and D260.

The protein belongs to the peroxidase family. Classical plant (class III) peroxidase subfamily. It depends on heme b as a cofactor. The cofactor is Ca(2+).

Its subcellular location is the secreted. It catalyses the reaction 2 a phenolic donor + H2O2 = 2 a phenolic radical donor + 2 H2O. In terms of biological role, removal of H(2)O(2), oxidation of toxic reductants, biosynthesis and degradation of lignin, suberization, auxin catabolism, response to environmental stresses such as wounding, pathogen attack and oxidative stress. These functions might be dependent on each isozyme/isoform in each plant tissue. May be implicated in the systemic acquired resistance response via the salicylic acid signal transduction pathway. This is Peroxidase 20 (PER20) from Arabidopsis thaliana (Mouse-ear cress).